Here is a 401-residue protein sequence, read N- to C-terminus: Glucose-6-phosphate isomerase (401 aa).

Glutamate 261 (proton donor) is an active-site residue. Catalysis depends on residues histidine 282 and lysine 392.

Belongs to the GPI family. Homodimer.

The protein resides in the cytoplasm. It catalyses the reaction alpha-D-glucose 6-phosphate = beta-D-fructose 6-phosphate. It participates in carbohydrate biosynthesis; gluconeogenesis. The protein operates within carbohydrate degradation; glycolysis; D-glyceraldehyde 3-phosphate and glycerone phosphate from D-glucose: step 2/4. With respect to regulation, competively inhibited by 6-phosphogluconate and erythrose 4-phosphate. Catalyzes the isomerization of glucose-6-P to fructose-6-P. The sequence is that of Glucose-6-phosphate isomerase from Methanocaldococcus jannaschii (strain ATCC 43067 / DSM 2661 / JAL-1 / JCM 10045 / NBRC 100440) (Methanococcus jannaschii).